We begin with the raw amino-acid sequence, 248 residues long: Probable transcriptional regulatory protein AZC_0510 (248 aa).

It belongs to the TACO1 family.

It is found in the cytoplasm. The protein is Probable transcriptional regulatory protein AZC_0510 of Azorhizobium caulinodans (strain ATCC 43989 / DSM 5975 / JCM 20966 / LMG 6465 / NBRC 14845 / NCIMB 13405 / ORS 571).